Reading from the N-terminus, the 435-residue chain is Putative F-box/kelch-repeat protein At1g20790 (435 aa).

Residues 1–49 form the F-box domain; that stretch reads MKRLPLHLLDEILFNLDPKSLGKMRCTNKSINTHISDDPNFKFEYFSRI. Kelch repeat units lie at residues 192–238 and 280–335; these read PVYV…CTGD and LYWN…LFKP.

This is Putative F-box/kelch-repeat protein At1g20790 from Arabidopsis thaliana (Mouse-ear cress).